Reading from the N-terminus, the 142-residue chain is Universal stress protein C (142 aa).

It belongs to the universal stress protein A family.

Its subcellular location is the cytoplasm. Functionally, required for resistance to DNA-damaging agents. The protein is Universal stress protein C (uspC) of Escherichia coli O157:H7.